The chain runs to 445 residues: MIEVDQSAGAPVRKHKFYQILYVQVLVAIVIGVLLGYFKPDLGEAMKPLGDGFIKLVKMIIAPVIFLTVTTGIAAMSDLKKVGRVAGKAMVYFLVFSTLALIIGMVVSHIVQPGAGLHIDPASLDQKSVAGYVTKAHDSTITGFLLNIIPATMLSPFVGGDILQVLFVAVLFGLSLAMVGPRAQPITDFFNALSAPVFKLVAILMKAAPIGAFGAMAFTIGKYGIKSIVNLAMLVGTFYATSVLFVVVVLGMVARYNGFSIIKLVRYIREELLLVLGTSSSEAALPTLMEKMERAGCSKSVVGLVVPTGYSFNLDGTNIYMTMAALFIAQACDIPLSLGDQILLLLVAMLSSKGAAGVTGAGFITLAATLSVVPTVPVAGMALILGVDRFMSECRALTNLVGNATASIVVARWEGELDKTALHVALNSDGELPSTDPTSPARQGH.

8 helical membrane passes run 17–37, 56–76, 91–111, 157–177, 200–220, 233–253, 319–339, and 367–387; these read FYQI…LLGY, LVKM…IAAM, VYFL…SHIV, FVGG…LSLA, LVAI…AFTI, MLVG…LGMV, IYMT…LSLG, and AATL…ILGV.

Belongs to the dicarboxylate/amino acid:cation symporter (DAACS) (TC 2.A.23) family.

The protein resides in the cell inner membrane. In terms of biological role, responsible for the transport of dicarboxylates such as succinate, fumarate, and malate from the periplasm across the membrane. The polypeptide is C4-dicarboxylate transport protein (Bordetella avium (strain 197N)).